Consider the following 171-residue polypeptide: 3-hydroxydecanoyl-[acyl-carrier-protein] dehydratase (171 aa).

Histidine 70 is a catalytic residue.

Belongs to the thioester dehydratase family. FabA subfamily. In terms of assembly, homodimer.

It localises to the cytoplasm. The enzyme catalyses a (3R)-hydroxyacyl-[ACP] = a (2E)-enoyl-[ACP] + H2O. It catalyses the reaction (3R)-hydroxydecanoyl-[ACP] = (2E)-decenoyl-[ACP] + H2O. It carries out the reaction (2E)-decenoyl-[ACP] = (3Z)-decenoyl-[ACP]. It functions in the pathway lipid metabolism; fatty acid biosynthesis. Functionally, necessary for the introduction of cis unsaturation into fatty acids. Catalyzes the dehydration of (3R)-3-hydroxydecanoyl-ACP to E-(2)-decenoyl-ACP and then its isomerization to Z-(3)-decenoyl-ACP. Can catalyze the dehydratase reaction for beta-hydroxyacyl-ACPs with saturated chain lengths up to 16:0, being most active on intermediate chain length. The chain is 3-hydroxydecanoyl-[acyl-carrier-protein] dehydratase from Methylobacillus flagellatus (strain ATCC 51484 / DSM 6875 / VKM B-1610 / KT).